Consider the following 482-residue polypeptide: MDTKGSTVTISSSTPPQNCSGNTNFRTNSSSNKSCCHDGQSTGCALQTPQGQGCGSSPCLYRCPHYLIRTYSFHPCLDDGSRCTEGINTHEKETMQILNERLANYLEKVRMLEGENADLEDKIQEACSKALPILCPDYLSYYTTIEELQQKILCTKAENSRLVSQIDNTKLAADDLRANYEAELSLRQLVEADANGLKQILDALTLSKADLEARVQSLTEELLCLKTNHEEEVNSLQCQLGDRINIEVTAAPSVDLNQILQEMRCRYESIMETNRKDVEEWFNTQMEELNQQVVSSSQQQQCCQKDIIELRRTISALEIELQAQHRMRESQECILTETEARYTALLAQIQSLIHNLEAQVADIRSALQRQSQEYEVLLDIKSRLECEIATYRSLLESLDGRLPCNPCATKWEPSCQARAMECFTPVYTSSSLPGIHKPCRASGPPSRILVKICTITKEIKDGKVISSYEHVQPCYITRATKV.

A disordered region spans residues 1–24 (MDTKGSTVTISSSTPPQNCSGNTN). Residues 1 to 91 (MDTKGSTVTI…RCTEGINTHE (91 aa)) are head. In terms of domain architecture, IF rod spans 91–402 (EKETMQILNE…SLLESLDGRL (312 aa)). Residues 92 to 126 (KETMQILNERLANYLEKVRMLEGENADLEDKIQEA) are coil 1A. Positions 127–137 (CSKALPILCPD) are linker 1. A coil 1B region spans residues 138–238 (YLSYYTTIEE…HEEEVNSLQC (101 aa)). Positions 239–254 (QLGDRINIEVTAAPSV) are linker 12. The tract at residues 255 to 398 (DLNQILQEMR…ATYRSLLESL (144 aa)) is coil 2. The tail stretch occupies residues 399-482 (DGRLPCNPCA…PCYITRATKV (84 aa)).

The protein belongs to the intermediate filament family. Heterotetramer of two type I and two type II keratins.

In terms of biological role, may play a role in late hair differentiation. The polypeptide is Keratin, type I cytoskeletal 39 (Krt39) (Mus musculus (Mouse)).